The chain runs to 272 residues: MAAKVFESIGKFGLGLAVAGGVVNSALYNVDAGHRAVIFDRFRGVQDTVVGEGTHFLIPWVQKPIIFDCRSRPRNIPVITGSKDLQNVNITLRILFRPVTAQLPRIFTSIGEDYDERVLPSITTEILKSVVARFDAGELITQRELVSRQVSEDLTERAATFGLILDDVSLTHLTFGKEFTEAVEMKQVAQQEAERARFIVEKAEQQKKAAVISAEGDSKAAELIANSLATAGDGLIELRKLEAAEDIAYQLSRSRNITYLPSGQSVLLQLPQ.

Residues 177–211 are a coiled coil; that stretch reads KEFTEAVEMKQVAQQEAERARFIVEKAEQQKKAAV.

The mitochondrial prohibitin complex consists of two subunits (PHB1 and PHB2), assembled into a membrane-associated ring-shaped supercomplex of approximately 1 mDa.

It localises to the mitochondrion inner membrane. The protein localises to the nucleus. Its subcellular location is the cytoplasm. The protein resides in the cell membrane. Protein with pleiotropic attributes mediated in a cell-compartment- and tissue-specific manner, which include the plasma membrane-associated cell signaling functions, mitochondrial chaperone, and transcriptional co-regulator of transcription factors in the nucleus. Its function is as follows. In the mitochondria, together with PHB2, forms large ring complexes (prohibitin complexes) in the inner mitochondrial membrane (IMM) and functions as a chaperone protein that stabilizes mitochondrial respiratory enzymes and maintains mitochondrial integrity in the IMM, which is required for mitochondrial morphogenesis, neuronal survival, and normal lifespan. Functionally, in the nucleus, acts as a transcription coregulator, enhances promoter binding by TP53, a transcription factor it activates, but reduces the promoter binding by E2F1, a transcription factor it represses. In terms of biological role, in the plasma membrane, cooperates with CD86 to mediate CD86-signaling in B lymphocytes that regulates the level of IgG1 produced through the activation of distal signaling intermediates. Upon CD40 engagement, required to activate NF-kappa-B signaling pathway via phospholipase C and protein kinase C activation. The protein is Prohibitin 1 (PHB1) of Gallus gallus (Chicken).